A 1450-amino-acid chain; its full sequence is DNA-directed RNA polymerase III subunit rpc1 (1450 aa).

Zn(2+)-binding residues include cysteine 67, cysteine 70, cysteine 77, histidine 80, cysteine 107, cysteine 110, and cysteine 154. Residues aspartate 491, aspartate 493, and aspartate 495 each contribute to the Mg(2+) site. A bridging helix region spans residues 832–844 (PTEFFFHTMGGRE).

It belongs to the RNA polymerase beta' chain family. Component of the RNA polymerase III (Pol III) complex consisting of 17 subunits.

Its subcellular location is the nucleus. It catalyses the reaction RNA(n) + a ribonucleoside 5'-triphosphate = RNA(n+1) + diphosphate. DNA-dependent RNA polymerase catalyzes the transcription of DNA into RNA using the four ribonucleoside triphosphates as substrates. Largest and catalytic core component of RNA polymerase III which synthesizes small RNAs, such as 5S rRNA and tRNAs. Forms the polymerase active center together with the second largest subunit. A single-stranded DNA template strand of the promoter is positioned within the central active site cleft of Pol III. A bridging helix emanates from RPC1 and crosses the cleft near the catalytic site and is thought to promote translocation of Pol III by acting as a ratchet that moves the RNA-DNA hybrid through the active site by switching from straight to bent conformations at each step of nucleotide addition. The sequence is that of DNA-directed RNA polymerase III subunit rpc1 (polr3a) from Dictyostelium discoideum (Social amoeba).